A 75-amino-acid polypeptide reads, in one-letter code: Brevinin-2HS2A (75 aa).

The N-terminal stretch at 1 to 22 is a signal peptide; that stretch reads MFTLKKPLLLLFFLGTISLSLC. The propeptide occupies 23-40; that stretch reads QEERDADEEEGEMIEEEV. A disulfide bridge connects residues Cys-69 and Cys-75.

Belongs to the frog skin active peptide (FSAP) family. Brevinin subfamily. As to expression, expressed by the skin glands.

Its subcellular location is the secreted. Functionally, has antimicrobial activity against some Gram-positive bacteria and fungi but has no activity against a range of Gram-negative bacteria except P.faecalis. Has antimicrobial activity against the Gram-positive bacteria S.aureus ATCC 25923 (MIC=19 uM), B.licheniformis X39 (MIC=37.5 uM) and R.rhodochrous X15 (MIC=9.5 uM), is virtually inactive against E.faecium 091299 (MIC=150 uM) and S.carnosus KHS (MIC=150 uM) and inactive against E.faecalis 981. Active against the Gram-negative bacterium P.faecalis X29 (MIC=9.5 uM) and is inactive against E.coli, P.aeruginosa and S.typhi. Active against C.albicans ATCC 2002 (MIC=19 uM) and is also active against the slime mold 090223 (MIC=37.5 uM). Has extremely low hemolytic activity against human erythrocytes (LC(50)=300 uM). The chain is Brevinin-2HS2A from Odorrana hainanensis (Odor frog).